The primary structure comprises 168 residues: G/U mismatch-specific DNA glycosylase (168 aa).

Belongs to the uracil-DNA glycosylase (UDG) superfamily. TDG/mug family. In terms of assembly, binds DNA as a monomer.

The protein localises to the cytoplasm. The enzyme catalyses Specifically hydrolyzes mismatched double-stranded DNA and polynucleotides, releasing free uracil.. Excises ethenocytosine and uracil, which can arise by alkylation or deamination of cytosine, respectively, from the corresponding mispairs with guanine in ds-DNA. It is capable of hydrolyzing the carbon-nitrogen bond between the sugar-phosphate backbone of the DNA and the mispaired base. The complementary strand guanine functions in substrate recognition. Required for DNA damage lesion repair in stationary-phase cells. The polypeptide is G/U mismatch-specific DNA glycosylase (Escherichia coli O139:H28 (strain E24377A / ETEC)).